Consider the following 128-residue polypeptide: MALPKDMRLKGHRTFNYIHKNSTIYHGKLMTFKVARSNPEILFTHKLTNNSNKFRMAIAISKKVSKKAVERNKLRRILQEWLLTNIKKINNHKPYWLLVNLKFGDFCNDKSRLLEEFQNLMFKSHLIK.

This sequence belongs to the RnpA family. In terms of assembly, consists of a catalytic RNA component (M1 or rnpB) and a protein subunit.

The enzyme catalyses Endonucleolytic cleavage of RNA, removing 5'-extranucleotides from tRNA precursor.. RNaseP catalyzes the removal of the 5'-leader sequence from pre-tRNA to produce the mature 5'-terminus. It can also cleave other RNA substrates such as 4.5S RNA. The protein component plays an auxiliary but essential role in vivo by binding to the 5'-leader sequence and broadening the substrate specificity of the ribozyme. This is Ribonuclease P protein component from Prochlorococcus marinus (strain MIT 9215).